Reading from the N-terminus, the 367-residue chain is Probable cysteine protease RD19D (367 aa).

The first 22 residues, 1 to 22, serve as a signal peptide directing secretion; sequence MVAKALAQLITCIILFCHVVAS. Positions 23-136 are cleaved as a propeptide — activation peptide; that stretch reads VEDLTIRQVT…AEAPMVEVDG (114 aa). A glycan (N-linked (GlcNAc...) asparagine) is linked at asparagine 61. Intrachain disulfides connect cysteine 158–cysteine 208 and cysteine 192–cysteine 241. Residue cysteine 161 is part of the active site. The N-linked (GlcNAc...) asparagine glycan is linked to asparagine 254. An intrachain disulfide couples cysteine 297 to cysteine 352. Catalysis depends on residues histidine 304 and asparagine 331.

This sequence belongs to the peptidase C1 family.

Its function is as follows. Probable thiol protease. This chain is Probable cysteine protease RD19D, found in Arabidopsis thaliana (Mouse-ear cress).